The following is a 602-amino-acid chain: Spermidine-citrate ligase (602 aa).

ATP contacts are provided by residues 286-288 (SLR), Lys300, and Arg312.

Belongs to the IucA/IucC family.

It catalyses the reaction spermidine + citrate + ATP = N(8)-citryl-spermidine + AMP + diphosphate + H(+). It participates in siderophore biosynthesis; petrobactin biosynthesis. Functionally, involved in the biosynthesis of petrobactin, a catecholate siderophore that functions in both iron acquisition and virulence. Catalyzes the ATP-dependent condensation of citric acid and spermidine to form N(8)-citryl-spermidine. It can also catalyze the condensation of several di- and triamine analogs of spermidine with citric acid and the condensation of the citric acid analog tricarballylic acid with spermidine. Required for growth in iron-depleted medium and for full virulence in a mouse model of infection. In Bacillus anthracis, this protein is Spermidine-citrate ligase.